The following is a 137-amino-acid chain: Large ribosomal subunit protein uL16 (137 aa).

The protein belongs to the universal ribosomal protein uL16 family. As to quaternary structure, part of the 50S ribosomal subunit.

Functionally, binds 23S rRNA and is also seen to make contacts with the A and possibly P site tRNAs. The polypeptide is Large ribosomal subunit protein uL16 (Streptococcus pneumoniae serotype 2 (strain D39 / NCTC 7466)).